Here is a 111-residue protein sequence, read N- to C-terminus: Small ribosomal subunit protein uS15c (111 aa).

It belongs to the universal ribosomal protein uS15 family. In terms of assembly, part of the 30S ribosomal subunit.

It localises to the plastid. Its subcellular location is the chloroplast. This chain is Small ribosomal subunit protein uS15c (rps15), found in Staurastrum punctulatum (Green alga).